A 242-amino-acid polypeptide reads, in one-letter code: Biosynthetic peptidoglycan transglycosylase (242 aa).

The chain crosses the membrane as a helical span at residues 19–39; that stretch reads ILAALAVFWGGGIALFSVVPV.

This sequence belongs to the glycosyltransferase 51 family.

It is found in the cell inner membrane. The catalysed reaction is [GlcNAc-(1-&gt;4)-Mur2Ac(oyl-L-Ala-gamma-D-Glu-L-Lys-D-Ala-D-Ala)](n)-di-trans,octa-cis-undecaprenyl diphosphate + beta-D-GlcNAc-(1-&gt;4)-Mur2Ac(oyl-L-Ala-gamma-D-Glu-L-Lys-D-Ala-D-Ala)-di-trans,octa-cis-undecaprenyl diphosphate = [GlcNAc-(1-&gt;4)-Mur2Ac(oyl-L-Ala-gamma-D-Glu-L-Lys-D-Ala-D-Ala)](n+1)-di-trans,octa-cis-undecaprenyl diphosphate + di-trans,octa-cis-undecaprenyl diphosphate + H(+). The protein operates within cell wall biogenesis; peptidoglycan biosynthesis. In terms of biological role, peptidoglycan polymerase that catalyzes glycan chain elongation from lipid-linked precursors. The chain is Biosynthetic peptidoglycan transglycosylase from Salmonella typhi.